We begin with the raw amino-acid sequence, 5147 residues long: Cadherin-related tumor suppressor (5147 aa).

The first 35 residues, 1-35 (MERLLLLFFLLLAGRESLCQTGDTKLELLAPRGRS), serve as a signal peptide directing secretion. 34 consecutive Cadherin domains span residues 36-156 (YATT…SPEF), 157-270 (PEPS…PPIF), 271-382 (DHSD…DPII), 383-494 (SFRF…EPVF), 495-599 (EKSE…APQF), 600-708 (SQRE…DPQF), 709-820 (YPRH…LEML), 821-942 (ECGQ…APVF), 943-1049 (ALDR…TPVF), 1050-1153 (DHTS…APQF), 1154-1278 (TNST…APEF), 1279-1384 (LRAP…APEF), 1385-1489 (TQSS…PPIF), 1490-1601 (PSTA…APVF), 1602-1713 (VSMN…VPQF), 1714-1823 (EQRS…PPQF), 1824-1922 (LDTP…PPLF), 1923-2027 (EDTV…APIF), 2028-2167 (DPMS…VPVF), 2168-2278 (ISAN…SPVF), 2279-2385 (DPKQ…PTFL), 2386-2491 (DSPY…DPVF), 2492-2596 (ELQS…IPKF), 2597-2703 (DSTT…FPTF), 2704-2810 (AYMA…APVM), 2811-2913 (EQLI…PPKF), 2914-3013 (TRLF…APEF), 3014-3124 (EHSF…PPKF), 3125-3229 (EQAE…TPRF), 3230-3334 (SVNS…PPVF), 3335-3439 (NHKE…YPQF), 3440-3545 (LQPV…PPEF), 3546-3651 (IKHY…GPTF), and 3652-3756 (TPEG…NPST). Residues 36-4583 (YATTYEQYAA…GQDAAQVADP (4548 aa)) are Extracellular-facing. N-linked (GlcNAc...) asparagine glycans are attached at residues asparagine 239, asparagine 257, asparagine 276, asparagine 280, asparagine 402, and asparagine 461. 2 N-linked (GlcNAc...) asparagine glycosylation sites follow: asparagine 605 and asparagine 631. 3 N-linked (GlcNAc...) asparagine glycosylation sites follow: asparagine 1155, asparagine 1367, and asparagine 1458. 3 N-linked (GlcNAc...) asparagine glycosylation sites follow: asparagine 1751, asparagine 1831, and asparagine 1880. N-linked (GlcNAc...) asparagine glycosylation is found at asparagine 2080, asparagine 2171, asparagine 2247, asparagine 2290, asparagine 2437, and asparagine 2581. An N-linked (GlcNAc...) asparagine glycan is attached at asparagine 2799. N-linked (GlcNAc...) asparagine glycans are attached at residues asparagine 2920, asparagine 2946, and asparagine 2967. Asparagine 3167, asparagine 3303, asparagine 3386, asparagine 3389, and asparagine 3525 each carry an N-linked (GlcNAc...) asparagine glycan. Asparagine 3852, asparagine 3865, and asparagine 3905 each carry an N-linked (GlcNAc...) asparagine glycan. EGF-like domains are found at residues 3950–4011 (GYEP…EQCS), 4013–4049 (RQDP…KHCE), 4052–4090 (RSDV…NQCE), and 4092–4128 (VSDS…RHCE). 16 disulfides stabilise this stretch: cysteine 3954-cysteine 3966, cysteine 3960-cysteine 3999, cysteine 4001-cysteine 4010, cysteine 4017-cysteine 4028, cysteine 4022-cysteine 4037, cysteine 4039-cysteine 4048, cysteine 4056-cysteine 4067, cysteine 4061-cysteine 4078, cysteine 4080-cysteine 4089, cysteine 4096-cysteine 4107, cysteine 4101-cysteine 4116, cysteine 4118-cysteine 4127, cysteine 4294-cysteine 4320, cysteine 4325-cysteine 4341, cysteine 4334-cysteine 4350, and cysteine 4352-cysteine 4361. The 192-residue stretch at 4129–4320 (RFSYGFQPLS…LQQKGILAGC (192 aa)) folds into the Laminin G-like 1 domain. N-linked (GlcNAc...) asparagine glycosylation occurs at asparagine 4306. The EGF-like 5 domain maps to 4321-4362 (NRQACQPALAAERCGGFAGQCIDRWSSSLCQCGGHLQSPDCS). The region spanning 4402–4569 (DNQQMRERRA…RYHGKIESGC (168 aa)) is the Laminin G-like 2 domain. N-linked (GlcNAc...) asparagine glycans are attached at residues asparagine 4414, asparagine 4471, asparagine 4487, asparagine 4539, and asparagine 4550. A disulfide bond links cysteine 4536 and cysteine 4569. Residues 4584–4609 (LSIGFTLVIVFFVILVVAILGSYVIY) form a helical membrane-spanning segment. At 4610–5147 (RFRGKQEKIG…NGPAAPEEYV (538 aa)) the chain is on the cytoplasmic side. An essential for stability of mitochondrial electron chain complexes I and V, and promotes interaction with ND-24 region spans residues 4744-4771 (PEHYDLENASSIAPSDIDIVYHYKGYRE). Disordered stretches follow at residues 4787-4850 (AYTH…SQQP), 4871-4921 (TSSS…QTSM), and 4967-5041 (GDVD…PIPP). The segment covering 4826 to 4835 (SASRTHQSTP) has biased composition (polar residues). Composition is skewed to low complexity over residues 4838 to 4850 (RLSP…SQQP) and 4891 to 4918 (SPVM…QAQQ). Residue serine 4843 is modified to Phosphoserine. A compositionally biased stretch (polar residues) spans 4972 to 5008 (HSSTSTDESGNDSFTCSEIEYDNNSLSGDGKYSTSKS). Residues serine 5054 and serine 5061 each carry the phosphoserine modification. The segment at 5113 to 5147 (PDTNGPSQQQQQQTQVVSTLRMPSSNGPAAPEEYV) is disordered. Residues 5119–5131 (SQQQQQQTQVVST) show a composition bias toward low complexity.

In terms of assembly, interacts with Fbxl7. Ft-mito interacts with NADH dehydrogenase subunit ND-24 and with ATP synthase subunit ATPsynC. Phosphorylated by fj on Ser/Thr of cadherin domains. Phosphorylation by fj enhances binding to ds. Phosphorylated in the cytoplasmic domain in a dco-dependent manner which is promoted by ds. Post-translationally, proteolytically cleaved to yield stably associated N- and C-terminal fragments. The C-terminal fragment is processed further to release a 68 kDa mitochondrial fragment, Ft-mito.

Its subcellular location is the cell membrane. It localises to the apical cell membrane. The protein resides in the mitochondrion. Its function is as follows. Involved in regulation of planar cell polarity in the compound eye where it is required for correct specification of the R3 and R4 photoreceptor cells by regulating Fz activity in the R3/R4 precursor cells. This is likely to occur through creation of an ft gradient so that the equatorial R3/R4 precursor cell has a higher level of ft function than its polar neighbor. Also required for planar cell polarity of wing hairs. Mediates heterophilic cell adhesion in vitro and is required to stabilize ds on the cell surface. Involved in regulation of eye imaginal disk size. Upstream component of the Hippo pathway where it is likely to act as a cell surface receptor involved in regulation of tissue size and is required for the localization and stability of ex. Probably acts as a cell surface receptor for ds. Regulates mitochondrial electron transport chain integrity and promotes oxidative phosphorylation. The chain is Cadherin-related tumor suppressor from Drosophila melanogaster (Fruit fly).